Reading from the N-terminus, the 220-residue chain is Deoxyribose-phosphate aldolase 2 (220 aa).

Residue D89 is the Proton donor/acceptor of the active site. The active-site Schiff-base intermediate with acetaldehyde is K151. The active-site Proton donor/acceptor is K180.

This sequence belongs to the DeoC/FbaB aldolase family. DeoC type 1 subfamily.

The protein resides in the cytoplasm. The enzyme catalyses 2-deoxy-D-ribose 5-phosphate = D-glyceraldehyde 3-phosphate + acetaldehyde. It functions in the pathway carbohydrate degradation; 2-deoxy-D-ribose 1-phosphate degradation; D-glyceraldehyde 3-phosphate and acetaldehyde from 2-deoxy-alpha-D-ribose 1-phosphate: step 2/2. Its function is as follows. Catalyzes a reversible aldol reaction between acetaldehyde and D-glyceraldehyde 3-phosphate to generate 2-deoxy-D-ribose 5-phosphate. This chain is Deoxyribose-phosphate aldolase 2, found in Staphylococcus aureus (strain N315).